Reading from the N-terminus, the 647-residue chain is Threonine--tRNA ligase (647 aa).

Residues 1-63 (MYMIQLTFPD…EHDGKIELVM (63 aa)) enclose the TGS domain. Residues 247 to 544 (DHRKLGKELD…LIEEYKGAFP (298 aa)) form a catalytic region. Residues cysteine 340, histidine 391, and histidine 521 each coordinate Zn(2+).

It belongs to the class-II aminoacyl-tRNA synthetase family. Homodimer. The cofactor is Zn(2+).

It is found in the cytoplasm. It catalyses the reaction tRNA(Thr) + L-threonine + ATP = L-threonyl-tRNA(Thr) + AMP + diphosphate + H(+). Functionally, catalyzes the attachment of threonine to tRNA(Thr) in a two-step reaction: L-threonine is first activated by ATP to form Thr-AMP and then transferred to the acceptor end of tRNA(Thr). Also edits incorrectly charged L-seryl-tRNA(Thr). The chain is Threonine--tRNA ligase from Exiguobacterium sp. (strain ATCC BAA-1283 / AT1b).